A 594-amino-acid polypeptide reads, in one-letter code: Probable ABC transporter-binding protein DR_1571 (594 aa).

The signal sequence occupies residues Met1 to Ala18.

Belongs to the bacterial solute-binding protein 5 family.

Functionally, probably part of a binding-protein-dependent transport system. This Deinococcus radiodurans (strain ATCC 13939 / DSM 20539 / JCM 16871 / CCUG 27074 / LMG 4051 / NBRC 15346 / NCIMB 9279 / VKM B-1422 / R1) protein is Probable ABC transporter-binding protein DR_1571.